The sequence spans 271 residues: GTP cyclohydrolase FolE2 (271 aa).

The protein belongs to the GTP cyclohydrolase IV family.

It carries out the reaction GTP + H2O = 7,8-dihydroneopterin 3'-triphosphate + formate + H(+). The protein operates within cofactor biosynthesis; 7,8-dihydroneopterin triphosphate biosynthesis; 7,8-dihydroneopterin triphosphate from GTP: step 1/1. Its function is as follows. Converts GTP to 7,8-dihydroneopterin triphosphate. The chain is GTP cyclohydrolase FolE2 from Geotalea uraniireducens (strain Rf4) (Geobacter uraniireducens).